Consider the following 272-residue polypeptide: Phosphonates import ATP-binding protein PhnC (272 aa).

Residues 2 to 244 enclose the ABC transporter domain; sequence LVFDKVNRVY…IQKRLYEIEH (243 aa). 35–42 contributes to the ATP binding site; sequence GPSGAGKS.

The protein belongs to the ABC transporter superfamily. Phosphonates importer (TC 3.A.1.9.1) family. The complex is composed of two ATP-binding proteins (PhnC), two transmembrane proteins (PhnE) and a solute-binding protein (PhnD).

The protein localises to the cell inner membrane. The enzyme catalyses phosphonate(out) + ATP + H2O = phosphonate(in) + ADP + phosphate + H(+). In terms of biological role, part of the ABC transporter complex PhnCDE involved in phosphonates import. Responsible for energy coupling to the transport system. The sequence is that of Phosphonates import ATP-binding protein PhnC from Hydrogenovibrio crunogenus (strain DSM 25203 / XCL-2) (Thiomicrospira crunogena).